The primary structure comprises 225 residues: PKHD-type hydroxylase YbiX (225 aa).

A Fe2OG dioxygenase domain is found at 78–177 (TLSTPLFNRY…RVASFMWIQS (100 aa)). The Fe cation site is built by histidine 96, aspartate 98, and histidine 158. 2-oxoglutarate is bound at residue arginine 168.

Requires Fe(2+) as cofactor. The cofactor is L-ascorbate.

This chain is PKHD-type hydroxylase YbiX, found in Shigella sonnei (strain Ss046).